A 75-amino-acid polypeptide reads, in one-letter code: Small ribosomal subunit protein bS18 (75 aa).

The protein belongs to the bacterial ribosomal protein bS18 family. Part of the 30S ribosomal subunit. Forms a tight heterodimer with protein bS6.

In terms of biological role, binds as a heterodimer with protein bS6 to the central domain of the 16S rRNA, where it helps stabilize the platform of the 30S subunit. The polypeptide is Small ribosomal subunit protein bS18 (Shewanella denitrificans (strain OS217 / ATCC BAA-1090 / DSM 15013)).